Consider the following 1092-residue polypeptide: Myelin regulatory factor (1092 aa).

Residues 1 to 730 lie on the Cytoplasmic side of the membrane; that stretch reads MDVEDENETL…CVSQRFLQAT (730 aa). 3 disordered regions span residues 145-168, 187-210, and 258-282; these read SYAA…PQQL, PPSR…SIHQ, and QQHG…TNTL. A compositionally biased stretch (pro residues) spans 196–205; the sequence is PPHLQGPLPP. Residues 246-507 constitute a DNA-binding region (NDT80); the sequence is AQQSQMLHQL…SNPGQFESDS (262 aa). The region spanning 553–662 is the Peptidase S74 domain; it reads SDIRAKESVE…KLTDNLETRI (110 aa). The stretch at 646 to 677 forms a coiled coil; that stretch reads GAVKELCKLTDNLETRIDELERWSHKLAKLRR. Residues 681–695 show a composition bias toward polar residues; sequence MKSTNSHTGSSQFSR. The tract at residues 681-714 is disordered; that stretch reads MKSTNSHTGSSQFSRAGSVPYKQRPPKVMGKTVP. A helical transmembrane segment spans residues 731–751; sequence IIALVIIMAFSVISMTTLYVL. Residues 752-1092 lie on the Lumenal side of the membrane; sequence NLRSEDDMLG…YYFRFYRLCD (341 aa). Disordered stretches follow at residues 798 to 817 and 849 to 945; these read TTQL…SPDW and ITRK…DSRY. Polar residues-rich tracts occupy residues 849 to 867 and 928 to 945; these read ITRK…TDPA and TPIT…DSRY. Residues asparagine 941, asparagine 961, asparagine 974, and asparagine 996 are each glycosylated (N-linked (GlcNAc...) asparagine).

The protein belongs to the MRF family. As to quaternary structure, homotrimer. In terms of processing, follows autocatalytic cleavage via the peptidase S74 domain. Autoprocessing is apparently constitutive and is essential for transcriptional activity.

The protein resides in the endoplasmic reticulum membrane. It localises to the nucleus. Its subcellular location is the cytoplasm. Functionally, constitutes a precursor of the transcription factor. Mediates the autocatalytic cleavage that releases the Myelin regulatory factor, N-terminal component that specifically activates transcription of central nervous system (CNS) myelin genes. Its function is as follows. Membrane-bound part that has no transcription factor activity and remains attached to the endoplasmic reticulum membrane following cleavage. In terms of biological role, transcription factor that specifically activates expression of myelin genes during oligodendrocyte (OL) maturation, thereby playing a central role in oligodendrocyte maturation and CNS myelination. In Xenopus laevis (African clawed frog), this protein is Myelin regulatory factor (myrf).